The chain runs to 486 residues: Cardiolipin synthase A (486 aa).

Transmembrane regions (helical) follow at residues 3 to 23 (TFYTVISWLLVFSYWLLIAGV) and 38 to 58 (MAWLLVIYILPLVGIVAYLSF). PLD phosphodiesterase domains lie at 219 to 246 (MDLRQHRKIILIDSRIAYTGSMNMVDPR) and 399 to 426 (KDGLLHTKSVLVDGQLSLVGTVNLDMRS). Active-site residues include histidine 224, lysine 226, aspartate 231, histidine 404, lysine 406, and aspartate 411.

Belongs to the phospholipase D family. Cardiolipin synthase subfamily. ClsA sub-subfamily.

It is found in the cell inner membrane. The enzyme catalyses 2 a 1,2-diacyl-sn-glycero-3-phospho-(1'-sn-glycerol) = a cardiolipin + glycerol. Its function is as follows. Catalyzes the reversible phosphatidyl group transfer from one phosphatidylglycerol molecule to another to form cardiolipin (CL) (diphosphatidylglycerol) and glycerol. The sequence is that of Cardiolipin synthase A from Pectobacterium atrosepticum (strain SCRI 1043 / ATCC BAA-672) (Erwinia carotovora subsp. atroseptica).